Here is a 30-residue protein sequence, read N- to C-terminus: Kalata-B10 (30 aa).

The segment at residues 1-30 is a cross-link (cyclopeptide (Gly-Asp)); the sequence is GLPTCGETCFGGTCNTPGCSCSSWPICTRD. Cystine bridges form between C5–C19, C9–C21, and C14–C27.

It belongs to the cyclotide family. Moebius subfamily. This peptide occurs in both cyclic and linear forms. The linear form contains unmodified Trp-24, the cyclic peptide occurs in two forms with unmodified Trp-24, and with Trp-24 oxidized to form oxindolylalanine. Oxidation is enhanced by exposure to sunlight.

Functionally, probably participates in a plant defense mechanism. The sequence is that of Kalata-B10 from Oldenlandia affinis.